Consider the following 524-residue polypeptide: Thioredoxin reductase 2, mitochondrial (524 aa).

A mitochondrion-targeting transit peptide spans 1–34 (MVAAMVAALRGPSRRFRPRTRALTRGTRGAASAA). 41-70 (DLLVIGGGSGGLACAKEAAQLGKKVAVADY) contacts FAD. Residue Lys-79 is modified to N6-succinyllysine. Cys-86 and Cys-91 are disulfide-bonded. An N6-succinyllysine mark is found at Lys-175 and Lys-329. His-497 functions as the Proton acceptor in the catalytic mechanism. The segment at residues 522 to 523 (CU) is a cross-link (cysteinyl-selenocysteine (Cys-Sec)). Position 523 (Sec-523) is a non-standard amino acid, selenocysteine.

This sequence belongs to the class-I pyridine nucleotide-disulfide oxidoreductase family. As to quaternary structure, homodimer. FAD serves as cofactor. In terms of tissue distribution, expressed in liver, heart, testis and kidney.

It localises to the mitochondrion. It carries out the reaction [thioredoxin]-dithiol + NADP(+) = [thioredoxin]-disulfide + NADPH + H(+). In terms of biological role, involved in the control of reactive oxygen species levels and the regulation of mitochondrial redox homeostasis. Maintains thioredoxin in a reduced state. May play a role in redox-regulated cell signaling. The protein is Thioredoxin reductase 2, mitochondrial of Mus musculus (Mouse).